A 382-amino-acid polypeptide reads, in one-letter code: Mannitol-1-phosphate 5-dehydrogenase (382 aa).

An NAD(+)-binding site is contributed by A3–G14. K269 bears the N6-acetyllysine mark.

It belongs to the mannitol dehydrogenase family.

The enzyme catalyses D-mannitol 1-phosphate + NAD(+) = beta-D-fructose 6-phosphate + NADH + H(+). This Escherichia coli O45:K1 (strain S88 / ExPEC) protein is Mannitol-1-phosphate 5-dehydrogenase.